A 603-amino-acid polypeptide reads, in one-letter code: Elongation factor 4 (603 aa).

The region spanning 7–189 (SRIRNFSIIA…SIVHLVPPPE (183 aa)) is the tr-type G domain. GTP contacts are provided by residues 19–24 (DHGKST) and 136–139 (NKID).

This sequence belongs to the TRAFAC class translation factor GTPase superfamily. Classic translation factor GTPase family. LepA subfamily.

Its subcellular location is the cell inner membrane. The enzyme catalyses GTP + H2O = GDP + phosphate + H(+). In terms of biological role, required for accurate and efficient protein synthesis under certain stress conditions. May act as a fidelity factor of the translation reaction, by catalyzing a one-codon backward translocation of tRNAs on improperly translocated ribosomes. Back-translocation proceeds from a post-translocation (POST) complex to a pre-translocation (PRE) complex, thus giving elongation factor G a second chance to translocate the tRNAs correctly. Binds to ribosomes in a GTP-dependent manner. The sequence is that of Elongation factor 4 from Acaryochloris marina (strain MBIC 11017).